The sequence spans 132 residues: Large ribosomal subunit protein bL17 (132 aa).

It belongs to the bacterial ribosomal protein bL17 family. As to quaternary structure, part of the 50S ribosomal subunit. Contacts protein L32.

The chain is Large ribosomal subunit protein bL17 from Polaromonas sp. (strain JS666 / ATCC BAA-500).